The primary structure comprises 874 residues: UPF0182 protein Sfum_2137 (874 aa).

7 consecutive transmembrane segments (helical) span residues 7-27, 57-77, 110-130, 171-191, 208-228, 252-272, and 283-303; these read WPLI…LSSL, IVFG…FWVA, SLWV…LPIF, RRLL…YLLE, LHLS…YVLQ, VIWA…FSMI, and PLVV…SAFL.

It belongs to the UPF0182 family.

The protein resides in the cell membrane. The protein is UPF0182 protein Sfum_2137 of Syntrophobacter fumaroxidans (strain DSM 10017 / MPOB).